The chain runs to 361 residues: Protein TIFY 8 (361 aa).

Disordered stretches follow at residues 53-78 (NKAAKAAMTPSTASASSAGGLGGLSS), 113-134 (RFSGNKRSNSDSHFTTQEHPET), 190-232 (QTAA…RKDL), and 268-361 (SGGS…KEAT). Low complexity predominate over residues 56–78 (AKAAMTPSTASASSAGGLGGLSS). 2 stretches are compositionally biased toward polar residues: residues 113–127 (RFSGNKRSNSDSHFT) and 208–232 (SSFTMPNSSKLESFAPSNTGNRKDL). One can recognise a Tify domain in the interval 232-267 (LASSTKQMTIFYGGQAHVFDDVHPNKADVIMALAGS). Over residues 333–361 (GREHQGSIISRGRDIRDPVHRSDPEKEAT) the composition is skewed to basic and acidic residues.

The protein belongs to the TIFY/JAZ family. In terms of assembly, interacts with AFPH2/NINJA. Post-translationally, ubiquitinated. Targeted for degradation by the SCF(COI1) E3 ubiquitin ligase-proteasome pathway during jasmonate signaling.

It localises to the nucleus. Functionally, repressor of jasmonate responses. This Arabidopsis thaliana (Mouse-ear cress) protein is Protein TIFY 8.